We begin with the raw amino-acid sequence, 45 residues long: Large ribosomal subunit protein bL34 (45 aa).

This sequence belongs to the bacterial ribosomal protein bL34 family.

This chain is Large ribosomal subunit protein bL34, found in Frankia casuarinae (strain DSM 45818 / CECT 9043 / HFP020203 / CcI3).